Reading from the N-terminus, the 47-residue chain is uncharacterized protein (47 aa).

Disordered stretches follow at residues 1–20 (MSTDNFEKIKGRPTQKEEWQ) and 25–47 (EKEKDENNRLFQEQKQKTTNRKG). Over residues 25–40 (EKEKDENNRLFQEQKQ) the composition is skewed to basic and acidic residues.

This is an uncharacterized protein from Dictyostelium discoideum (Social amoeba).